The primary structure comprises 144 residues: Large ribosomal subunit protein uL16 (144 aa).

Basic residues predominate over residues 1 to 19 (MLLPKRVKYRRQHRPKTTG). A disordered region spans residues 1–23 (MLLPKRVKYRRQHRPKTTGRSKG).

This sequence belongs to the universal ribosomal protein uL16 family. In terms of assembly, part of the 50S ribosomal subunit.

Binds 23S rRNA and is also seen to make contacts with the A and possibly P site tRNAs. This Staphylococcus epidermidis (strain ATCC 35984 / DSM 28319 / BCRC 17069 / CCUG 31568 / BM 3577 / RP62A) protein is Large ribosomal subunit protein uL16.